The following is a 106-amino-acid chain: Small ribosomal subunit protein bS18 (106 aa).

The disordered stretch occupies residues 1 to 41 (MAEEHSNQRSQTFNGERTNRPSRKPRGDGERRGRRQGGRRR).

The protein belongs to the bacterial ribosomal protein bS18 family. Part of the 30S ribosomal subunit. Forms a tight heterodimer with protein bS6.

Binds as a heterodimer with protein bS6 to the central domain of the 16S rRNA, where it helps stabilize the platform of the 30S subunit. The polypeptide is Small ribosomal subunit protein bS18 (Oenococcus oeni (strain ATCC BAA-331 / PSU-1)).